We begin with the raw amino-acid sequence, 297 residues long: Formylmethanofuran--tetrahydromethanopterin formyltransferase (297 aa).

Belongs to the FTR family. Homotetramer.

It is found in the cytoplasm. The catalysed reaction is N-formylmethanofuran + 5,6,7,8-tetrahydromethanopterin + H(+) = N(5)-formyl-5,6,7,8-tetrahydromethanopterin + methanofuran. Its pathway is one-carbon metabolism; methanogenesis from CO(2); 5,10-methenyl-5,6,7,8-tetrahydromethanopterin from CO(2): step 2/3. Functionally, catalyzes the reversible transfer of a formyl group from formylmethanofuran (formyl-MFR) to tetrahydromethanopterin (H(4)MPT) to produce 5-formyl tetrahydromethanopterin (5-formyl-H(4)MPT) and methanofuran (MFR). This Methanococcoides burtonii (strain DSM 6242 / NBRC 107633 / OCM 468 / ACE-M) protein is Formylmethanofuran--tetrahydromethanopterin formyltransferase.